Consider the following 149-residue polypeptide: MIRVVATGTFDILHPGHLYYLEESRNLGDELSVIVARDANVKHKPRPFLPEDQRLRMIRALKPVDHALLGDLHDMFRPIAEIRPDIITLGFNQHFDEEHLRQKLRERGLDADVVRIPGYPGSLASSSKIIERILNTRGPPDPTGSHGEE.

ATP contacts are provided by residues 9–10 (TF), 14–17 (HPGH), N92, and Y119.

Belongs to the archaeal FAD synthase family. Homodimer. The cofactor is a divalent metal cation.

It catalyses the reaction FMN + ATP + H(+) = FAD + diphosphate. The protein operates within cofactor biosynthesis; FAD biosynthesis; FAD from FMN: step 1/1. Catalyzes the transfer of the AMP portion of ATP to flavin mononucleotide (FMN) to produce flavin adenine dinucleotide (FAD) coenzyme. This is FAD synthase from Methanoculleus marisnigri (strain ATCC 35101 / DSM 1498 / JR1).